A 482-amino-acid polypeptide reads, in one-letter code: Isoxanthopterin deaminase (482 aa).

Zn(2+) is bound by residues His74 and His76. Residue Gln79 participates in substrate binding. Residue His246 coordinates Zn(2+). Substrate-binding residues include Glu249 and His283. Zn(2+) contacts are provided by His283 and Asp334.

The protein belongs to the metallo-dependent hydrolases superfamily. ATZ/TRZ family. It depends on Zn(2+) as a cofactor.

It carries out the reaction a 2-amino-4-hydroxypteridine + H2O + H(+) = a 2,4-dihydroxypteridine + NH4(+). The chain is Isoxanthopterin deaminase from Unknown prokaryotic organism.